The following is a 378-amino-acid chain: Carbamoyl phosphate synthase small chain (378 aa).

The segment at 1 to 189 is CPSase; it reads MTKPAILALA…DSHPEIAASE (189 aa). Residues S47, G241, and G243 each coordinate L-glutamine. A Glutamine amidotransferase type-1 domain is found at 193–378; the sequence is HVVAYDYGVK…RFIDAMAKRR (186 aa). C269 acts as the Nucleophile in catalysis. 5 residues coordinate L-glutamine: L270, Q273, N311, G313, and F314. Catalysis depends on residues H353 and E355.

This sequence belongs to the CarA family. In terms of assembly, composed of two chains; the small (or glutamine) chain promotes the hydrolysis of glutamine to ammonia, which is used by the large (or ammonia) chain to synthesize carbamoyl phosphate. Tetramer of heterodimers (alpha,beta)4.

It catalyses the reaction hydrogencarbonate + L-glutamine + 2 ATP + H2O = carbamoyl phosphate + L-glutamate + 2 ADP + phosphate + 2 H(+). The catalysed reaction is L-glutamine + H2O = L-glutamate + NH4(+). It participates in amino-acid biosynthesis; L-arginine biosynthesis; carbamoyl phosphate from bicarbonate: step 1/1. It functions in the pathway pyrimidine metabolism; UMP biosynthesis via de novo pathway; (S)-dihydroorotate from bicarbonate: step 1/3. In terms of biological role, small subunit of the glutamine-dependent carbamoyl phosphate synthetase (CPSase). CPSase catalyzes the formation of carbamoyl phosphate from the ammonia moiety of glutamine, carbonate, and phosphate donated by ATP, constituting the first step of 2 biosynthetic pathways, one leading to arginine and/or urea and the other to pyrimidine nucleotides. The small subunit (glutamine amidotransferase) binds and cleaves glutamine to supply the large subunit with the substrate ammonia. This Pseudomonas syringae pv. tomato (strain ATCC BAA-871 / DC3000) protein is Carbamoyl phosphate synthase small chain.